The primary structure comprises 226 residues: CRISPR-associated endonuclease Cas3-HD (226 aa).

The region spanning 9–204 is the HD Cas3-type domain; that stretch reads GRDCLQTYED…HVLTVCDNWG (196 aa). Mg(2+)-binding residues include Asp-56, His-74, His-101, and His-102.

The protein belongs to the CRISPR-associated nuclease Cas3-HD family. Monomer. Can form a Cascade complex with Csa5, Cas7, Cas5a, Cas3 and Cas8a2. Mg(2+) is required as a cofactor.

Functionally, CRISPR (clustered regularly interspaced short palindromic repeat), is an adaptive immune system that provides protection against mobile genetic elements (viruses, transposable elements and conjugative plasmids). CRISPR clusters contain sequences complementary to antecedent mobile elements and target invading nucleic acids. CRISPR clusters are transcribed and processed into CRISPR RNA (crRNA). Cas3 plus Cascade participate in CRISPR interference, the third stage of CRISPR immunity. Acts as a ssDNA and ssRNA nuclease, probably with both exo- and endonuclease activities. Activity is higher for DNA than RNA. The polypeptide is CRISPR-associated endonuclease Cas3-HD (cas3') (Thermoproteus tenax (strain ATCC 35583 / DSM 2078 / JCM 9277 / NBRC 100435 / Kra 1)).